A 274-amino-acid chain; its full sequence is Hydroxyacylglutathione hydrolase, cytoplasmic isozyme (274 aa).

Zn(2+)-binding residues include His59, His61, Asp63, His64, His121, and Asp144. Substrate is bound by residues Arg153 and 188 to 190 (HEY). Residue His188 participates in Zn(2+) binding. The residue at position 257 (Ser257) is a Phosphoserine. Substrate is bound at residue 268–271 (RAMK).

The protein belongs to the metallo-beta-lactamase superfamily. Glyoxalase II family. Zn(2+) is required as a cofactor.

Its subcellular location is the cytoplasm. It catalyses the reaction an S-(2-hydroxyacyl)glutathione + H2O = a 2-hydroxy carboxylate + glutathione + H(+). The enzyme catalyses (R)-S-lactoylglutathione + H2O = (R)-lactate + glutathione + H(+). Its pathway is secondary metabolite metabolism; methylglyoxal degradation; (R)-lactate from methylglyoxal: step 2/2. Inhibited by various thiol compounds such as glutathione and coenzyme A. Its function is as follows. Thiolesterase that catalyzes the hydrolysis of S-D-lactoylglutathione to form glutathione and D-lactic acid. Involved in the metabolism of methylglyoxal, a toxic compound for yeast proliferation, by converting methylglyoxal to lactate via S-D-lactoylglutathione by sequential enzyme reactions catalyzed by glyoxalase I and glyoxalase II. This chain is Hydroxyacylglutathione hydrolase, cytoplasmic isozyme, found in Saccharomyces cerevisiae (strain ATCC 204508 / S288c) (Baker's yeast).